Here is a 288-residue protein sequence, read N- to C-terminus: 33 kDa chaperonin (288 aa).

Disulfide bonds link Cys-236-Cys-238 and Cys-269-Cys-272.

The protein belongs to the HSP33 family. Under oxidizing conditions two disulfide bonds are formed involving the reactive cysteines. Under reducing conditions zinc is bound to the reactive cysteines and the protein is inactive.

The protein localises to the cytoplasm. Redox regulated molecular chaperone. Protects both thermally unfolding and oxidatively damaged proteins from irreversible aggregation. Plays an important role in the bacterial defense system toward oxidative stress. This Syntrophotalea carbinolica (strain DSM 2380 / NBRC 103641 / GraBd1) (Pelobacter carbinolicus) protein is 33 kDa chaperonin.